The primary structure comprises 2567 residues: Highly reducing polyketide synthase sor1 (2567 aa).

The region spanning 14–436 is the Ketosynthase family 3 (KS3) domain; that stretch reads SEPIAIIGMS…GANAHIILED (423 aa). Catalysis depends on for beta-ketoacyl synthase activity residues Cys187, His322, and His359. Residues 550-841 form a malonyl-CoA:ACP transacylase (MAT) domain region; the sequence is VFTGQGAQWW…VVEVGPHTAL (292 aa). An N-terminal hotdog fold region spans residues 939–1079; sequence HHLLGSLVEG…GLISIEFEAS (141 aa). The segment at 939 to 1249 is dehydratase (DH) domain; that stretch reads HHLLGSLVEG…GFSYQSLGRS (311 aa). The PKS/mFAS DH domain occupies 939 to 1252; it reads HHLLGSLVEG…YQSLGRSVSL (314 aa). The active-site Proton acceptor; for dehydratase activity is the His971. The tract at residues 1095–1252 is C-terminal hotdog fold; the sequence is YKRQIPPAQL…YQSLGRSVSL (158 aa). Asp1161 acts as the Proton donor; for dehydratase activity in catalysis. Positions 1426–1534 are methyltransferase (CMet) domain; it reads LEIGASTGGI…RSLLKPGGTL (109 aa). Positions 1852 to 2163 are enoyl reductase (ER) domain; that stretch reads FLPELLVFGD…TEEETGKRVL (312 aa). Residues 2187 to 2369 form a ketoreductase (KR) domain region; it reads ASYLIVGGNG…AVSIDLSLVD (183 aa). The 78-residue stretch at 2481-2558 folds into the Carrier domain; the sequence is EAISVVGSAV…QLVANVVDRS (78 aa). Ser2518 carries the O-(pantetheine 4'-phosphoryl)serine modification.

It functions in the pathway secondary metabolite biosynthesis. Highly reducing polyketide synthase; part of the SOR gene cluster that mediates the biosynthesis of sorbicillinoids, a diverse group of yellow secondary metabolites that restrict growth of competing pathogenic fungi but not of bacteria. Sorbicillinoids biosynthesis requires the action of two PKSs. The SOR cluster is required for the production of trichodimerol and dihydrotrichotetronin, with sor2 being sufficient for production of trichodimerol, but not dihydrotrichotetronin in the light. Sor1 iteratively combines three acetyl units and the growing chain is modified by the ketoacyl reductase subunit, and optional by the enoyl reductase subunit in the second cycle. The polyketide is then handed over to the PKS sor2, which adds three more acetyl units, and two methyl groups. Sor2 releases an aldehyde, which undergoes spontaneous cyclization resulting in the formation of sorbicillin or 2',3'-dihydrosorbicillin. The monooxygenase sor5 oxidizes sorbicillin and 2',3'-dihydrosorbicillin to 2',3'-dihydrosorbicillinol and sorbicillinol, respectively. The oxidoreductase sor8 further converts sorbicillinol into oxosorbicillinol. Sorbicillinol is the building block for the other sorbicillinoids such as disorbicillinol, bisvertinolon, dihydrobisvertinolone, and dihydrotrichotetronine. The polypeptide is Highly reducing polyketide synthase sor1 (Hypocrea jecorina (strain QM6a) (Trichoderma reesei)).